A 184-amino-acid polypeptide reads, in one-letter code: ATP synthase subunit delta (184 aa).

The protein belongs to the ATPase delta chain family. F-type ATPases have 2 components, F(1) - the catalytic core - and F(0) - the membrane proton channel. F(1) has five subunits: alpha(3), beta(3), gamma(1), delta(1), epsilon(1). F(0) has three main subunits: a(1), b(2) and c(10-14). The alpha and beta chains form an alternating ring which encloses part of the gamma chain. F(1) is attached to F(0) by a central stalk formed by the gamma and epsilon chains, while a peripheral stalk is formed by the delta and b chains.

Its subcellular location is the cell inner membrane. Functionally, f(1)F(0) ATP synthase produces ATP from ADP in the presence of a proton or sodium gradient. F-type ATPases consist of two structural domains, F(1) containing the extramembraneous catalytic core and F(0) containing the membrane proton channel, linked together by a central stalk and a peripheral stalk. During catalysis, ATP synthesis in the catalytic domain of F(1) is coupled via a rotary mechanism of the central stalk subunits to proton translocation. Its function is as follows. This protein is part of the stalk that links CF(0) to CF(1). It either transmits conformational changes from CF(0) to CF(1) or is implicated in proton conduction. The chain is ATP synthase subunit delta from Caulobacter vibrioides (strain NA1000 / CB15N) (Caulobacter crescentus).